The sequence spans 122 residues: uncharacterized protein (122 aa).

This is an uncharacterized protein from Human adenovirus F serotype 41 (HAdV-41).